Here is an 807-residue protein sequence, read N- to C-terminus: Leucine-rich repeat-containing protein 41 (807 aa).

The tract at residues 45–54 (ALFELCGRAV) is interaction with Elongin BC complex. Phosphoserine occurs at positions 155, 276, and 326. Disordered stretches follow at residues 269 to 290 (ASRG…RRPR), 304 to 335 (TRRK…AIGG), and 349 to 403 (ASGT…GSGA). Residue Thr-327 is modified to Phosphothreonine. The segment covering 352-381 (TKQPSAPAAASASSSTSSKRAPASSASQPK) has biased composition (low complexity). At Ser-368 the chain carries Phosphoserine. Residues 382–396 (PLKRFKRAAGKKGPR) are compositionally biased toward basic residues. 7 LRR repeats span residues 482-502 (WVSL…IFRL), 513-525 (AGCR…LSDL), 526-550 (FSPL…VLSI), 608-632 (SGSL…LVLQ), 638-661 (NLSL…VLFL), 696-723 (NSTL…VFSE), and 726-747 (SSSL…LLEF).

In terms of assembly, part of an E3 ubiquitin-protein ligase complex with Elongin BC (ELOB and ELOC), RBX1 and CUL5. Component of a probable ECS(LRRC41) complex which contains CUL5, RNF7/RBX2, Elongin BC and LRRC41. Interacts with CUL5, RNF7, ELOB and ELOC.

It participates in protein modification; protein ubiquitination. In terms of biological role, probable substrate recognition component of an ECS (Elongin BC-CUL2/5-SOCS-box protein) E3 ubiquitin ligase complex which mediates the ubiquitination and subsequent proteasomal degradation of target proteins. The polypeptide is Leucine-rich repeat-containing protein 41 (Lrrc41) (Mus musculus (Mouse)).